The primary structure comprises 479 residues: Ribosomal RNA small subunit methyltransferase F (479 aa).

S-adenosyl-L-methionine-binding positions include 125-131, glutamate 149, aspartate 176, and aspartate 194; that span reads AAAPGSK. The active-site Nucleophile is the cysteine 247.

The protein belongs to the class I-like SAM-binding methyltransferase superfamily. RsmB/NOP family.

The protein resides in the cytoplasm. The catalysed reaction is cytidine(1407) in 16S rRNA + S-adenosyl-L-methionine = 5-methylcytidine(1407) in 16S rRNA + S-adenosyl-L-homocysteine + H(+). Specifically methylates the cytosine at position 1407 (m5C1407) of 16S rRNA. The protein is Ribosomal RNA small subunit methyltransferase F of Escherichia coli (strain SMS-3-5 / SECEC).